Reading from the N-terminus, the 340-residue chain is MNICVNSLYRLSTPQFHSLYSEEVSDETLALLIGEVENGNQNCIDLLCNLALRNDNLGHKVEKLLFDLFSGKRSGSPDIDKKINQACLVLHQIANNDITKNNTEWKKLHAPSRLLYMAGSATTDLSKKIEIAHKIMGDQFAQTDQEQVGVENLWCGARMLSSDELAAATQGLAQESPLLSVNYPIGLIHPTTKENILSTQLLEKIAQSGLSHNEVFLVNTGDHWLLCLFYKLAEKIKCLIFNTYYDLNENTKQEIIEAAKIAGISENEDIDFIETNLQNNVPNGCGLFCYHTIQLLSNAGQNDPATTLREFAENFLTLSVEEQTLFNTQTRRQIYEYSLQ.

Residue His-223 is part of the active site. The active-site Nucleophile is Cys-285.

This sequence belongs to the peptidase C79 family.

The protein resides in the secreted. It is found in the host cytoplasm. Effector proteins function to alter host cell physiology and promote bacterial survival in host tissues. This protease targets the host cell ubiquitin pathway by acting as a deubiquitinase in infected host cells. This chain is Deubiquitinase SseL (sseL), found in Salmonella paratyphi A (strain ATCC 9150 / SARB42).